The chain runs to 262 residues: UPF0758 protein BTH_I0781 (262 aa).

The interval Met-1–Arg-45 is disordered. Residues Val-22–Ala-43 show a composition bias toward low complexity. Residues Leu-140–Ile-262 enclose the MPN domain. The Zn(2+) site is built by His-211, His-213, and Asp-224. A JAMM motif motif is present at residues His-211–Asp-224.

This sequence belongs to the UPF0758 family.

In Burkholderia thailandensis (strain ATCC 700388 / DSM 13276 / CCUG 48851 / CIP 106301 / E264), this protein is UPF0758 protein BTH_I0781.